Reading from the N-terminus, the 261-residue chain is General secretion pathway protein N (261 aa).

Topologically, residues Met-1–Thr-10 are cytoplasmic. A helical transmembrane segment spans residues Trp-11 to Leu-31. Residues Gly-32 to Gln-261 lie on the Periplasmic side of the membrane. Residues Val-158 to Gln-261 are disordered. Residues Ala-179–Glu-200 show a composition bias toward pro residues. The segment covering Val-201 to Pro-211 has biased composition (low complexity). Basic and acidic residues predominate over residues Arg-227 to Arg-244.

As to quaternary structure, binds to XpsD.

The protein resides in the cell inner membrane. Functionally, involved in a general secretion pathway (GSP) for the export of proteins. This Xanthomonas campestris pv. campestris (strain ATCC 33913 / DSM 3586 / NCPPB 528 / LMG 568 / P 25) protein is General secretion pathway protein N (xpsN).